Here is a 180-residue protein sequence, read N- to C-terminus: uncharacterized protein (180 aa).

The protein resides in the mitochondrion. This is an uncharacterized protein from Marchantia polymorpha (Common liverwort).